The primary structure comprises 207 residues: Dephospho-CoA kinase (207 aa).

One can recognise a DPCK domain in the interval 10 to 207; it reads ILGLTGGIGS…FYLTLKGGQP (198 aa). 18-23 lines the ATP pocket; the sequence is GSGKSA.

Belongs to the CoaE family.

It is found in the cytoplasm. The catalysed reaction is 3'-dephospho-CoA + ATP = ADP + CoA + H(+). It participates in cofactor biosynthesis; coenzyme A biosynthesis; CoA from (R)-pantothenate: step 5/5. Catalyzes the phosphorylation of the 3'-hydroxyl group of dephosphocoenzyme A to form coenzyme A. The chain is Dephospho-CoA kinase from Pseudomonas putida (strain ATCC 47054 / DSM 6125 / CFBP 8728 / NCIMB 11950 / KT2440).